The primary structure comprises 180 residues: Small ribosomal subunit protein uS5 (180 aa).

The interval 1–20 (MAKMQGRMQGKVAPGDDRGD) is disordered. The 64-residue stretch at 22–85 (LKEKMVAINR…DEARRKMIKV (64 aa)) folds into the S5 DRBM domain.

Belongs to the universal ribosomal protein uS5 family. In terms of assembly, part of the 30S ribosomal subunit. Contacts proteins S4 and S8.

Functionally, with S4 and S12 plays an important role in translational accuracy. Located at the back of the 30S subunit body where it stabilizes the conformation of the head with respect to the body. The protein is Small ribosomal subunit protein uS5 of Nitrosospira multiformis (strain ATCC 25196 / NCIMB 11849 / C 71).